A 58-amino-acid polypeptide reads, in one-letter code: UPF0391 membrane protein Sputcn32_1322 (58 aa).

Transmembrane regions (helical) follow at residues 6-26 and 28-48; these read LMFL…IAGA and AGIA…SLLV.

This sequence belongs to the UPF0391 family.

It localises to the cell membrane. The protein is UPF0391 membrane protein Sputcn32_1322 of Shewanella putrefaciens (strain CN-32 / ATCC BAA-453).